Consider the following 79-residue polypeptide: Small ribosomal subunit protein bS18 (79 aa).

It belongs to the bacterial ribosomal protein bS18 family. Part of the 30S ribosomal subunit. Forms a tight heterodimer with protein bS6.

Its function is as follows. Binds as a heterodimer with protein bS6 to the central domain of the 16S rRNA, where it helps stabilize the platform of the 30S subunit. In Latilactobacillus sakei subsp. sakei (strain 23K) (Lactobacillus sakei subsp. sakei), this protein is Small ribosomal subunit protein bS18.